Here is a 2002-residue protein sequence, read N- to C-terminus: [F-actin]-monooxygenase MICAL3 (2002 aa).

The monooxygenase domain stretch occupies residues Glu-2–Lys-494. FAD-binding positions include Cys-97, Glu-116–Arg-118, Arg-123–Asn-125, Phe-183, Tyr-298, and Asp-398. The Calponin-homology (CH) domain occupies Val-518 to Lys-624. Ser-649 is modified (phosphoserine). Residues Gly-658 to Thr-706 form a disordered region. The Nuclear localization signal motif lies at Arg-663–Thr-684. Basic and acidic residues predominate over residues Asp-669–Gly-679. Ser-685 and Ser-687 each carry phosphoserine. The LIM zinc-binding domain maps to Asp-762–Gly-824. Positions 764, 767, 785, 788, 791, 794, 814, and 817 each coordinate Zn(2+). The segment at Pro-835–Arg-883 is disordered. Residue Thr-887 is modified to Phosphothreonine. 3 disordered regions span residues Gln-907–Ala-1313, Arg-1335–Arg-1776, and Leu-1791–Glu-1821. The segment covering Ser-938–Glu-950 has biased composition (acidic residues). The residue at position 977 (Ser-977) is a Phosphoserine. A compositionally biased stretch (acidic residues) spans Asn-991–Ser-1017. Residues His-1041–Met-1054 are compositionally biased toward basic and acidic residues. Low complexity predominate over residues Ala-1055–Pro-1066. Residues Asp-1068–Asp-1102 show a composition bias toward acidic residues. Ser-1134, Ser-1143, Ser-1160, and Ser-1192 each carry phosphoserine. A compositionally biased stretch (polar residues) spans Gly-1150 to Glu-1163. The segment covering Lys-1191–Ala-1218 has biased composition (basic and acidic residues). Positions Pro-1239 to Leu-1258 are enriched in pro residues. Composition is skewed to polar residues over residues Thr-1268–Ile-1280 and Lys-1288–Ser-1302. Ser-1274 is subject to Phosphoserine. Position 1276 is a phosphothreonine (Thr-1276). At Ser-1278 the chain carries Phosphoserine. Phosphoserine occurs at positions 1310 and 1337. The residue at position 1341 (Thr-1341) is a Phosphothreonine. Ser-1371 and Ser-1384 each carry phosphoserine. Positions Pro-1407–Leu-1422 are enriched in basic and acidic residues. The segment covering Ser-1423–Ser-1435 has biased composition (low complexity). A Phosphoserine modification is found at Ser-1433. Polar residues predominate over residues Asn-1436 to Ala-1451. Position 1454 is a phosphothreonine (Thr-1454). Residues Pro-1456 to Glu-1467 are compositionally biased toward pro residues. The segment covering Ser-1516–Tyr-1530 has biased composition (acidic residues). Basic and acidic residues predominate over residues Glu-1588 to Val-1604. Position 1649 is a phosphoserine (Ser-1649). Residue Thr-1651 is modified to Phosphothreonine. Residues Gly-1657–Thr-1668 show a composition bias toward basic and acidic residues. Low complexity predominate over residues Ser-1674–Gly-1694. A compositionally biased stretch (basic residues) spans Lys-1695–Lys-1713. Residues Ser-1701 and Ser-1704 each carry the phosphoserine modification. Residues Cys-1760–Thr-1769 show a composition bias toward polar residues. Residues Val-1804–Thr-1820 show a composition bias toward basic and acidic residues. A coiled-coil region spans residues Glu-1821–Met-1992. Positions Lys-1841–Ala-1990 constitute a bMERB domain. Ser-1912 is subject to Phosphoserine.

This sequence belongs to the Mical family. As to quaternary structure, interacts with RAB1B, RAB8A, RAB10, RAB13 and RAB15 (in their GTP-bound forms); binding to RAB1B is of low affinity compared to other Rab proteins; at least in case of RAB8A can bind 2 molecules of RAB8A simultaneously through a high and a low affinity binding site, respectively. Interacts with ERC1 and RAB8A; may bridge ERC1 with RAB8A. Interacts with KIF23 and ERC1; enhances the interaction between KIF23 and ERC1. Interacts with NINL isoform 2. FAD serves as cofactor. Ubiquitous.

It localises to the cytoplasm. The protein localises to the cell cortex. The protein resides in the cytoskeleton. Its subcellular location is the nucleus. It is found in the midbody. It localises to the spindle. The protein localises to the cilium basal body. The enzyme catalyses L-methionyl-[F-actin] + NADPH + O2 + H(+) = L-methionyl-(R)-S-oxide-[F-actin] + NADP(+) + H2O. Its function is as follows. Monooxygenase that promotes depolymerization of F-actin by mediating oxidation of specific methionine residues on actin to form methionine-sulfoxide, resulting in actin filament disassembly and preventing repolymerization. In the absence of actin, it also functions as a NADPH oxidase producing H(2)O(2). Seems to act as Rab effector protein and plays a role in vesicle trafficking. Involved in exocytic vesicles tethering and fusion: the monooxygenase activity is required for this process and implicates RAB8A associated with exocytotic vesicles. Required for cytokinesis. Contributes to stabilization and/or maturation of the intercellular bridge independently of its monooxygenase activity. Promotes recruitment of Rab8 and ERC1 to the intercellular bridge, and together these proteins are proposed to function in timely abscission. In Homo sapiens (Human), this protein is [F-actin]-monooxygenase MICAL3 (MICAL3).